The primary structure comprises 471 residues: Abscisic acid 8'-hydroxylase 1 (471 aa).

The chain crosses the membrane as a helical span at residues 1-21 (MGAFLLFVCVLAPFLLVCAVR). Cys-415 lines the heme pocket.

It belongs to the cytochrome P450 family. Heme serves as cofactor. In seedlings and expanding leaves.

The protein localises to the membrane. The catalysed reaction is 2-cis-(+)-abscisate + reduced [NADPH--hemoprotein reductase] + O2 = (+)-8'-hydroxyabscisate + oxidized [NADPH--hemoprotein reductase] + H2O + H(+). It functions in the pathway plant hormone degradation; abscisic acid degradation. Its function is as follows. Involved in the oxidative degradation of abscisic acid. The sequence is that of Abscisic acid 8'-hydroxylase 1 (CYP707A5) from Oryza sativa subsp. indica (Rice).